A 285-amino-acid polypeptide reads, in one-letter code: Pantothenate synthetase (285 aa).

30–37 serves as a coordination point for ATP; that stretch reads MGNLHDGH. H37 (proton donor) is an active-site residue. Q61 contacts (R)-pantoate. Q61 contacts beta-alanine. 149 to 152 is an ATP binding site; that stretch reads GEKD. Residue Q155 coordinates (R)-pantoate. ATP-binding positions include I178 and 186–189; that span reads FSSR.

This sequence belongs to the pantothenate synthetase family. Homodimer.

Its subcellular location is the cytoplasm. It carries out the reaction (R)-pantoate + beta-alanine + ATP = (R)-pantothenate + AMP + diphosphate + H(+). It participates in cofactor biosynthesis; (R)-pantothenate biosynthesis; (R)-pantothenate from (R)-pantoate and beta-alanine: step 1/1. Functionally, catalyzes the condensation of pantoate with beta-alanine in an ATP-dependent reaction via a pantoyl-adenylate intermediate. This chain is Pantothenate synthetase, found in Buchnera aphidicola subsp. Schizaphis graminum (strain Sg).